A 193-amino-acid chain; its full sequence is Putative histone H2B type 2-C (193 aa).

Residues 1-12 (MPEPAKFAPAPK) show a composition bias toward low complexity. The disordered stretch occupies residues 1–33 (MPEPAKFAPAPKKGSKKAVTKAQKKDGKKRKRS). N-acetylproline is present on Pro-2. At Lys-6 the chain carries N6-(2-hydroxyisobutyryl)lysine; alternate. Lys-6 and Lys-12 each carry N6-(beta-hydroxybutyryl)lysine; alternate. 3 positions are modified to N6-acetyllysine; alternate: Lys-6, Lys-12, and Lys-13. Lys-6 is subject to N6-butyryllysine; alternate. 3 positions are modified to N6-crotonyllysine; alternate: Lys-6, Lys-12, and Lys-13. Residues Lys-6 and Lys-12 each carry the N6-lactoyllysine; alternate modification. Lys-6 participates in a covalent cross-link: Glycyl lysine isopeptide (Lys-Gly) (interchain with G-Cter in SUMO2); alternate. Position 13 is an N6-(2-hydroxyisobutyryl)lysine; alternate (Lys-13). A Phosphoserine; by STK4/MST1 modification is found at Ser-15. N6-acetyllysine; alternate occurs at positions 16, 17, 21, and 24. An N6-crotonyllysine; alternate mark is found at Lys-16, Lys-17, Lys-21, and Lys-24. N6-lactoyllysine; alternate occurs at positions 16, 17, 21, and 24. N6-(beta-hydroxybutyryl)lysine; alternate is present on residues Lys-17 and Lys-21. Lys-17 bears the N6-glutaryllysine; alternate mark. An N6-(2-hydroxyisobutyryl)lysine; alternate mark is found at Lys-21 and Lys-24. Lys-21 carries the post-translational modification N6-butyryllysine; alternate. Lys-21 participates in a covalent cross-link: Glycyl lysine isopeptide (Lys-Gly) (interchain with G-Cter in SUMO2); alternate. At Lys-25 the chain carries N6-(2-hydroxyisobutyryl)lysine. At Lys-35 the chain carries N6-(2-hydroxyisobutyryl)lysine; alternate. Lys-35 is modified (N6-(beta-hydroxybutyryl)lysine; alternate). Position 35 is an N6-crotonyllysine; alternate (Lys-35). Lys-35 carries the post-translational modification N6-glutaryllysine; alternate. Residue Lys-35 is modified to N6-succinyllysine; alternate. Lys-35 is covalently cross-linked (Glycyl lysine isopeptide (Lys-Gly) (interchain with G-Cter in ubiquitin); alternate). At Ser-37 the chain carries Phosphoserine; by AMPK. 3 positions are modified to N6-(2-hydroxyisobutyryl)lysine; alternate: Lys-44, Lys-47, and Lys-58. An N6-lactoyllysine; alternate modification is found at Lys-44. 2 positions are modified to N6-glutaryllysine; alternate: Lys-44 and Lys-47. Lys-47 bears the N6-methyllysine; alternate mark. At Lys-58 the chain carries N6,N6-dimethyllysine; alternate. At Arg-80 the chain carries Dimethylated arginine. Residue Lys-86 is modified to N6-(2-hydroxyisobutyryl)lysine; alternate. At Lys-86 the chain carries N6-(beta-hydroxybutyryl)lysine; alternate. Residue Lys-86 is modified to N6-acetyllysine; alternate. An N6-lactoyllysine; alternate modification is found at Lys-86. Lys-86 bears the N6,N6,N6-trimethyllysine; alternate mark. Omega-N-methylarginine occurs at positions 87 and 93. The tract at residues 111–136 (PCPRAPRRSPSTPAPSESLPGPGARS) is disordered.

Belongs to the histone H2B family. In terms of assembly, the nucleosome is a histone octamer containing two molecules each of H2A, H2B, H3 and H4 assembled in one H3-H4 heterotetramer and two H2A-H2B heterodimers. The octamer wraps approximately 147 bp of DNA. In terms of processing, phosphorylation at Ser-37 (H2BS36ph) by AMPK in response to stress promotes transcription. Phosphorylated on Ser-15 (H2BS14ph) by STK4/MST1 during apoptosis; which facilitates apoptotic chromatin condensation. Also phosphorylated on Ser-15 in response to DNA double strand breaks (DSBs), and in correlation with somatic hypermutation and immunoglobulin class-switch recombination. Post-translationally, crotonylation (Kcr) is specifically present in male germ cells and marks testis-specific genes in post-meiotic cells, including X-linked genes that escape sex chromosome inactivation in haploid cells. Crotonylation marks active promoters and enhancers and confers resistance to transcriptional repressors. It is also associated with post-meiotically activated genes on autosomes. Lactylated in macrophages by EP300/P300 by using lactoyl-CoA directly derived from endogenous or exogenous lactate, leading to stimulates gene transcription.

It localises to the nucleus. Its subcellular location is the chromosome. In terms of biological role, core component of nucleosome. Nucleosomes wrap and compact DNA into chromatin, limiting DNA accessibility to the cellular machineries which require DNA as a template. Histones thereby play a central role in transcription regulation, DNA repair, DNA replication and chromosomal stability. DNA accessibility is regulated via a complex set of post-translational modifications of histones, also called histone code, and nucleosome remodeling. This chain is Putative histone H2B type 2-C, found in Homo sapiens (Human).